Here is a 201-residue protein sequence, read N- to C-terminus: 3-isopropylmalate dehydratase small subunit (201 aa).

Belongs to the LeuD family. LeuD type 1 subfamily. Heterodimer of LeuC and LeuD.

It carries out the reaction (2R,3S)-3-isopropylmalate = (2S)-2-isopropylmalate. It participates in amino-acid biosynthesis; L-leucine biosynthesis; L-leucine from 3-methyl-2-oxobutanoate: step 2/4. Catalyzes the isomerization between 2-isopropylmalate and 3-isopropylmalate, via the formation of 2-isopropylmaleate. This Shewanella halifaxensis (strain HAW-EB4) protein is 3-isopropylmalate dehydratase small subunit.